The sequence spans 621 residues: tRNA uridine 5-carboxymethylaminomethyl modification enzyme MnmG (621 aa).

FAD is bound at residue 8–13 (GAGHAG). NAD(+) is bound at residue 269–283 (GPRYCPSVEDKIFRF).

The protein belongs to the MnmG family. In terms of assembly, homodimer. Heterotetramer of two MnmE and two MnmG subunits. FAD serves as cofactor.

The protein localises to the cytoplasm. NAD-binding protein involved in the addition of a carboxymethylaminomethyl (cmnm) group at the wobble position (U34) of certain tRNAs, forming tRNA-cmnm(5)s(2)U34. The protein is tRNA uridine 5-carboxymethylaminomethyl modification enzyme MnmG of Chlorobium chlorochromatii (strain CaD3).